The following is a 541-amino-acid chain: Arginine--tRNA ligase (541 aa).

Positions 119–129 (ANPTGPLHIGH) match the 'HIGH' region motif.

It belongs to the class-I aminoacyl-tRNA synthetase family. As to quaternary structure, monomer.

The protein resides in the cytoplasm. The enzyme catalyses tRNA(Arg) + L-arginine + ATP = L-arginyl-tRNA(Arg) + AMP + diphosphate. This Helicobacter pylori (strain P12) protein is Arginine--tRNA ligase.